We begin with the raw amino-acid sequence, 81 residues long: Large ribosomal subunit protein bL31B (81 aa).

Belongs to the bacterial ribosomal protein bL31 family. Type B subfamily. As to quaternary structure, part of the 50S ribosomal subunit.

This is Large ribosomal subunit protein bL31B (rpmE2) from Lactiplantibacillus plantarum (strain ATCC BAA-793 / NCIMB 8826 / WCFS1) (Lactobacillus plantarum).